We begin with the raw amino-acid sequence, 418 residues long: D-amino acid dehydrogenase (418 aa).

3–17 contributes to the FAD binding site; it reads VLVLGAGVVGTTSAW.

It belongs to the DadA oxidoreductase family. FAD serves as cofactor.

The enzyme catalyses a D-alpha-amino acid + A + H2O = a 2-oxocarboxylate + AH2 + NH4(+). It participates in amino-acid degradation; D-alanine degradation; NH(3) and pyruvate from D-alanine: step 1/1. Oxidative deamination of D-amino acids. This is D-amino acid dehydrogenase from Dechloromonas aromatica (strain RCB).